We begin with the raw amino-acid sequence, 483 residues long: Shutoff alkaline exonuclease (483 aa).

This sequence belongs to the herpesviridae alkaline nuclease family. Forms a complex with the DNA polymerase, the DNA polymerase processivity factor, and the major DNA binding protein.

The protein resides in the host nucleus. It localises to the host cytoplasm. Functionally, plays a role in processing non linear or branched viral DNA intermediates in order to promote the production of mature packaged unit-length linear progeny viral DNA molecules. Exhibits endonuclease and exonuclease activities and accepts both double-stranded and single-stranded DNA as substrate. Exonuclease digestion of DNA is in the 5'-&gt; 3' direction and the products are 5'-monophosphate nucleosides. Additionally, forms a recombinase with the major DNA-binding protein, which displays strand exchange activity. Also acts as a cytoplasmic RNA endonuclease that induces degradation of the majority of the cellular messenger RNAs during early lytic infection. The resulting inhibition of cellular protein synthesis serves to ensure maximal viral gene expression and evasion from host immune response. Internally cleaves host mRNAs which are then degraded by the cellular exonuclease XRN1. Bypasses therefore the regulatory steps of deadenylation and decapping normally required for XRN1 activation. In Saimiriine herpesvirus 2 (strain 11) (SaHV-2), this protein is Shutoff alkaline exonuclease (37).